Consider the following 484-residue polypeptide: Glutamate--tRNA ligase (484 aa).

The short motif at Pro11 to Asn21 is the 'HIGH' region element. Residues Lys252–Arg256 carry the 'KMSKS' region motif. An ATP-binding site is contributed by Lys255.

It belongs to the class-I aminoacyl-tRNA synthetase family. Glutamate--tRNA ligase type 1 subfamily. Monomer.

It is found in the cytoplasm. The catalysed reaction is tRNA(Glu) + L-glutamate + ATP = L-glutamyl-tRNA(Glu) + AMP + diphosphate. Catalyzes the attachment of glutamate to tRNA(Glu) in a two-step reaction: glutamate is first activated by ATP to form Glu-AMP and then transferred to the acceptor end of tRNA(Glu). This chain is Glutamate--tRNA ligase, found in Staphylococcus epidermidis (strain ATCC 35984 / DSM 28319 / BCRC 17069 / CCUG 31568 / BM 3577 / RP62A).